The primary structure comprises 334 residues: Phosphate acyltransferase (334 aa).

Belongs to the PlsX family. As to quaternary structure, homodimer. Probably interacts with PlsY.

The protein localises to the cytoplasm. The catalysed reaction is a fatty acyl-[ACP] + phosphate = an acyl phosphate + holo-[ACP]. It participates in lipid metabolism; phospholipid metabolism. In terms of biological role, catalyzes the reversible formation of acyl-phosphate (acyl-PO(4)) from acyl-[acyl-carrier-protein] (acyl-ACP). This enzyme utilizes acyl-ACP as fatty acyl donor, but not acyl-CoA. The chain is Phosphate acyltransferase from Halothermothrix orenii (strain H 168 / OCM 544 / DSM 9562).